Reading from the N-terminus, the 300-residue chain is MKIAILSRDGTLYSCKRLVEAAEQRGHSIEVIDPLSCYMNINPAAPTIHYRGRQLERYDAVIPRIGSAMTFYGTAVLRQFELLGSYPLNESVAITRARDKLRSLQLLARQGIDLPITGFAHSPDDTGDLIELVGGAPLVVKLVEGTQGIGVVLAETRQAAESVIDAFRGLNAHILVQEYIREAQGSDVRCLVVGSKVVAAIERQAKPGEFRSNLHRGGTARKVSITAKERAIAVKAATTLGLDVAGVDILRAARGPLVMEVNASPGLEGVESTTGLDIAGRMIEYIEQRGRPGFRLKSGG.

The ATP-grasp domain occupies 104-287 (LQLLARQGID…IAGRMIEYIE (184 aa)). ATP contacts are provided by residues lysine 141, 178–179 (EY), aspartate 187, and 211–213 (RSN). Mg(2+) contacts are provided by aspartate 248, glutamate 260, and asparagine 262. Residues aspartate 248, glutamate 260, and asparagine 262 each coordinate Mn(2+).

It belongs to the RimK family. Mg(2+) is required as a cofactor. It depends on Mn(2+) as a cofactor.

The chain is Probable alpha-L-glutamate ligase from Serratia proteamaculans (strain 568).